The chain runs to 713 residues: Early transcription factor 82 kDa subunit (713 aa).

Belongs to the poxviridae VETF large subunit family. Heterodimer of a 70 kDa and a 82 kDa subunit. Part of the early transcription complex composed of ETF, RAP94, and the DNA-directed RNA polymerase.

Its function is as follows. Acts with RNA polymerase to initiate transcription from early gene promoters. Is recruited by the RPO-associated protein of 94 kDa (RAP94) to form the early transcription complex, which also contains the core RNA polymerase. ETF heterodimer binds to early gene promoters. This chain is Early transcription factor 82 kDa subunit (VETFL), found in Yaba monkey tumor virus (strain VR587) (YMTV).